The following is a 689-amino-acid chain: Elongation factor G (689 aa).

Residues 9–283 form the tr-type G domain; the sequence is AKFRNIGIMA…AIIEFMPSPL (275 aa). GTP-binding positions include 18-25, 82-86, and 136-139; these read AHIDAGKT, DTPGH, and NKMD.

Belongs to the TRAFAC class translation factor GTPase superfamily. Classic translation factor GTPase family. EF-G/EF-2 subfamily.

Its subcellular location is the cytoplasm. Its function is as follows. Catalyzes the GTP-dependent ribosomal translocation step during translation elongation. During this step, the ribosome changes from the pre-translocational (PRE) to the post-translocational (POST) state as the newly formed A-site-bound peptidyl-tRNA and P-site-bound deacylated tRNA move to the P and E sites, respectively. Catalyzes the coordinated movement of the two tRNA molecules, the mRNA and conformational changes in the ribosome. The chain is Elongation factor G from Clostridium botulinum (strain ATCC 19397 / Type A).